Reading from the N-terminus, the 396-residue chain is NADH-quinone oxidoreductase subunit D (396 aa).

This sequence belongs to the complex I 49 kDa subunit family. As to quaternary structure, NDH-1 is composed of 14 different subunits. Subunits NuoB, C, D, E, F, and G constitute the peripheral sector of the complex.

It is found in the cell inner membrane. The enzyme catalyses a quinone + NADH + 5 H(+)(in) = a quinol + NAD(+) + 4 H(+)(out). NDH-1 shuttles electrons from NADH, via FMN and iron-sulfur (Fe-S) centers, to quinones in the respiratory chain. The immediate electron acceptor for the enzyme in this species is believed to be ubiquinone. Couples the redox reaction to proton translocation (for every two electrons transferred, four hydrogen ions are translocated across the cytoplasmic membrane), and thus conserves the redox energy in a proton gradient. In Bartonella quintana (strain Toulouse) (Rochalimaea quintana), this protein is NADH-quinone oxidoreductase subunit D.